Reading from the N-terminus, the 110-residue chain is Hydrogenase maturation factor HypA (110 aa).

His-2 contributes to the Ni(2+) binding site. Zn(2+)-binding residues include Cys-70, Cys-73, Cys-86, and Cys-89.

Belongs to the HypA/HybF family.

Its function is as follows. Involved in the maturation of [NiFe] hydrogenases. Required for nickel insertion into the metal center of the hydrogenase. In Geotalea daltonii (strain DSM 22248 / JCM 15807 / FRC-32) (Geobacter daltonii), this protein is Hydrogenase maturation factor HypA.